A 74-amino-acid chain; its full sequence is Tau-AnmTx Ueq 12-1 (74 aa).

The first 18 residues, 1–18 (MCLLMLVLGAMYVQGWHS), serve as a signal peptide directing secretion. Positions 19–27 (AGFGKRTLK) are cleaved as a propeptide — removed in mature form. Disulfide bonds link Cys30–Cys37, Cys40–Cys71, Cys46–Cys64, Cys51–Cys72, and Cys58–Cys73.

Belongs to the Cnidaria small cysteine-rich protein (SCRiP) family. Detected in mucus secreted from ectoderm.

The protein resides in the secreted. Its function is as follows. Potentiates activation of mammalian TRPA1, a non-selective cation channel involved in perception of pain, in vitro yet has an analgesic and anti-inflammatory effect in vivo. Has antibacterial activity against C.glutamicum (MIC=50 uM) and, to a lesser extent, against S.aureus but not against P.aeruginosa or E.coli. This Urticina eques (Sea anemone) protein is Tau-AnmTx Ueq 12-1.